The chain runs to 257 residues: Ribosomal RNA small subunit methyltransferase J (257 aa).

Residues 109 to 110, 125 to 126, and Asp-179 each bind S-adenosyl-L-methionine; these read RD and ER.

Belongs to the methyltransferase superfamily. RsmJ family.

It localises to the cytoplasm. The enzyme catalyses guanosine(1516) in 16S rRNA + S-adenosyl-L-methionine = N(2)-methylguanosine(1516) in 16S rRNA + S-adenosyl-L-homocysteine + H(+). Functionally, specifically methylates the guanosine in position 1516 of 16S rRNA. The protein is Ribosomal RNA small subunit methyltransferase J of Actinobacillus succinogenes (strain ATCC 55618 / DSM 22257 / CCUG 43843 / 130Z).